The primary structure comprises 533 residues: MNGAYRGALSRLLSKPFFLPLLSGLLLGISFPTWPAVHLEPLAWIALVPLLLSLEHEERFGPFFRKSWMSMLLFCLIALWWVCLATFVGGILTVFVQSLFSVVPLVVFYYFKKRAGFRSALLALPFIWTGWEWAYMQQDFSLGWLTFGNSQANLLWMVQYADVTGVWGVSFWLLTFNVLVLLLFMEKESFQVKVGIVMVMLVMIATPLLYARQVFRNTALDNTSPKVRVALVQPDIDPHEKWDGLGPEETLSRLYSLTGQSVRGERLELIIWPETAIPFYIRLPENKPYMDSVRRMVMRWNTPLLTGFPDEVPVFPNSARGEAVAASGAEYAAYNASMLLHPAGGPVQIYRKMRLVPFGERVPYSEYFPWLERLSFSMSGISSWAKGREATVMHFTSRDGQPVRMANIICYESIFPGQVSTFVRRGAQFLTLVTNDGWYGTSYGPWQHAAIDRLRCIENRRAMARCANTGVTLFYDICGRSYAETPWWQQSVLTADVPLESRITFYTAHPDLVPHVCLGIAGVLALVAAVRKR.

The next 5 membrane-spanning stretches (helical) occupy residues 17–37 (FFLP…WPAV), 72–92 (LLFC…GGIL), 116–136 (GFRS…WAYM), 165–185 (GVWG…LLFM), and 190–210 (FQVK…PLLY). The region spanning 232–499 (VQPDIDPHEK…QSVLTADVPL (268 aa)) is the CN hydrolase domain. Catalysis depends on Glu-274, which acts as the Proton acceptor. Lys-352 is an active-site residue. The active-site Nucleophile is Cys-410. A helical membrane pass occupies residues 510–530 (PDLVPHVCLGIAGVLALVAAV).

Belongs to the CN hydrolase family. Apolipoprotein N-acyltransferase subfamily.

The protein localises to the cell inner membrane. It carries out the reaction N-terminal S-1,2-diacyl-sn-glyceryl-L-cysteinyl-[lipoprotein] + a glycerophospholipid = N-acyl-S-1,2-diacyl-sn-glyceryl-L-cysteinyl-[lipoprotein] + a 2-acyl-sn-glycero-3-phospholipid + H(+). The protein operates within protein modification; lipoprotein biosynthesis (N-acyl transfer). Its function is as follows. Catalyzes the phospholipid dependent N-acylation of the N-terminal cysteine of apolipoprotein, the last step in lipoprotein maturation. This Chlorobaculum tepidum (strain ATCC 49652 / DSM 12025 / NBRC 103806 / TLS) (Chlorobium tepidum) protein is Apolipoprotein N-acyltransferase.